The primary structure comprises 167 residues: Peptide deformylase (167 aa).

Residues C90 and H132 each coordinate Fe cation. E133 is an active-site residue. H136 contributes to the Fe cation binding site.

Belongs to the polypeptide deformylase family. Requires Fe(2+) as cofactor.

It catalyses the reaction N-terminal N-formyl-L-methionyl-[peptide] + H2O = N-terminal L-methionyl-[peptide] + formate. Its function is as follows. Removes the formyl group from the N-terminal Met of newly synthesized proteins. Requires at least a dipeptide for an efficient rate of reaction. N-terminal L-methionine is a prerequisite for activity but the enzyme has broad specificity at other positions. In Dehalococcoides mccartyi (strain ATCC BAA-2100 / JCM 16839 / KCTC 5957 / BAV1), this protein is Peptide deformylase.